Consider the following 795-residue polypeptide: ATP-dependent RNA helicase DHX15 (795 aa).

The disordered stretch occupies residues 1–108 (MSKRHRLDLG…HSTHAGHAGH (108 aa)). The residue at position 15 (Ser-15) is a Phosphoserine. Residues 20-62 (AGTDGKDRDRDRDREDRSKDRDRERDRGDREREREKEKEKELR) are compositionally biased toward basic and acidic residues. The segment covering 79-108 (ASHSAHSTHSAHSTHSTHSAHSTHAGHAGH) has biased composition (low complexity). In terms of domain architecture, Helicase ATP-binding spans 147–313 (TDILVRHQSF…FDNCPLLTIP (167 aa)). Residue 160 to 167 (GETGSGKT) coordinates ATP. Positions 260–263 (DEAH) match the DEAH box motif. In terms of domain architecture, Helicase C-terminal spans 338–518 (TVIQIHMCEE…SVVLQLKKLG (181 aa)). The residue at position 488 (Lys-488) is an N6-acetyllysine. A Glycyl lysine isopeptide (Lys-Gly) (interchain with G-Cter in SUMO2) cross-link involves residue Lys-786.

Belongs to the DEAD box helicase family. DEAH subfamily. DDX15/PRP43 sub-subfamily. In terms of assembly, component of the U11/U12 snRNPs that are part of the U12-type spliceosome. Identified in the Intron Large spliceosome complex (IL, also named intron lariat spliceosome), a post-mRNA release spliceosomal complex containing the excised intron, U2, U5 and U6 snRNPs, and splicing factors; the association may be transient. The IL complex exists in two distinct conformations, one with the DHX15 (ILS2) and one without (ILS1). Interacts with TFIP11 (via G-patch domain); indicative for a recruitment to the IL complex. Interacts with SSB/La. Interacts with GPATCH2 (via G-patch domain); promoting the RNA helicase activity. Interacts with NKRF (via G-patch domain); promoting the RNA helicase activity. Interacts with NLRP6. In terms of tissue distribution, ubiquitous.

The protein localises to the nucleus. It is found in the nucleolus. The catalysed reaction is ATP + H2O = ADP + phosphate + H(+). With respect to regulation, ATPase activity is enhanced upon binding to G-patch domain-containing proteins. G-patch domain-containing proteins act like a brace that tethers mobile sections of DHX15 together, stabilizing a functional conformation with high RNA affinity, thereby promoting the ATPase activity. In terms of biological role, RNA helicase involved in mRNA processing and antiviral innate immunity. Pre-mRNA processing factor involved in disassembly of spliceosomes after the release of mature mRNA. In cooperation with TFIP11 seem to be involved in the transition of the U2, U5 and U6 snRNP-containing IL complex to the snRNP-free IS complex leading to efficient debranching and turnover of excised introns. Plays a key role in antiviral innate immunity by promoting both MAVS-dependent signaling and NLRP6 inflammasome. Acts as an RNA virus sensor: recognizes and binds viral double stranded RNA (dsRNA) and activates the MAVS-dependent signaling to produce interferon-beta and interferon lambda-3 (IFNL3). Involved in intestinal antiviral innate immunity together with NLRP6: recognizes and binds viral dsRNA and promotes activation of the NLRP6 inflammasome in intestinal epithelial cells to restrict infection by enteric viruses. The NLRP6 inflammasome acts by promoting maturation and secretion of IL18 in the extracellular milieu. Also involved in antibacterial innate immunity by promoting Wnt-induced antimicrobial protein expression in Paneth cells. This is ATP-dependent RNA helicase DHX15 from Homo sapiens (Human).